The primary structure comprises 359 residues: Phosphoserine aminotransferase (359 aa).

Arg-41 provides a ligand contact to L-glutamate. The pyridoxal 5'-phosphate site is built by Trp-101, Thr-151, Asp-170, and Gln-193. Lys-194 is subject to N6-(pyridoxal phosphate)lysine. Asn-235–Thr-236 contacts pyridoxal 5'-phosphate.

It belongs to the class-V pyridoxal-phosphate-dependent aminotransferase family. SerC subfamily. In terms of assembly, homodimer. Pyridoxal 5'-phosphate serves as cofactor.

The protein resides in the cytoplasm. The enzyme catalyses O-phospho-L-serine + 2-oxoglutarate = 3-phosphooxypyruvate + L-glutamate. It catalyses the reaction 4-(phosphooxy)-L-threonine + 2-oxoglutarate = (R)-3-hydroxy-2-oxo-4-phosphooxybutanoate + L-glutamate. It functions in the pathway amino-acid biosynthesis; L-serine biosynthesis; L-serine from 3-phospho-D-glycerate: step 2/3. Its pathway is cofactor biosynthesis; pyridoxine 5'-phosphate biosynthesis; pyridoxine 5'-phosphate from D-erythrose 4-phosphate: step 3/5. Catalyzes the reversible conversion of 3-phosphohydroxypyruvate to phosphoserine and of 3-hydroxy-2-oxo-4-phosphonooxybutanoate to phosphohydroxythreonine. In Laribacter hongkongensis (strain HLHK9), this protein is Phosphoserine aminotransferase.